Reading from the N-terminus, the 249-residue chain is Probable transcriptional regulatory protein ZMO0153 (249 aa).

Belongs to the TACO1 family.

It localises to the cytoplasm. The polypeptide is Probable transcriptional regulatory protein ZMO0153 (Zymomonas mobilis subsp. mobilis (strain ATCC 31821 / ZM4 / CP4)).